Consider the following 68-residue polypeptide: Small ribosomal subunit protein bS21 (68 aa).

The segment at 39–68 is disordered; the sequence is PPSVKRVRKKQESERRHRKERAMRRRMMEE. The segment covering 54-68 has biased composition (basic residues); that stretch reads RHRKERAMRRRMMEE.

Belongs to the bacterial ribosomal protein bS21 family.

This is Small ribosomal subunit protein bS21 from Orientia tsutsugamushi (strain Ikeda) (Rickettsia tsutsugamushi).